Reading from the N-terminus, the 860-residue chain is Protein argonaute-2 (860 aa).

Tyr-2 carries the 3'-nitrotyrosine modification. Residues 230–349 form the PAZ domain; the sequence is PVIEFVCEVL…LPLEVCNIVA (120 aa). Positions 312 to 317 are interaction with guide RNA; that stretch reads YFKDRH. Position 388 is a phosphoserine (Ser-388). Positions 518–819 constitute a Piwi domain; sequence LVVVILPGKT…VAFRARYHLV (302 aa). The interval 525 to 567 is interaction with guide RNA; it reads GKTPVYAEVKRVGDTVLGMATQCVQMKNVQRTTPQTLSNLCLK. An interaction with GW182 family members region spans residues 588-591; it reads FQQP. Residue Asp-598 coordinates a divalent metal cation. The tract at residues 651 to 661 is interaction with GW182 family members; the sequence is LIQFYKSTRFK. An a divalent metal cation-binding site is contributed by Asp-670. Pro-701 is subject to 4-hydroxyproline. Interaction with guide RNA stretches follow at residues 710 to 711, 754 to 762, and 791 to 813; these read KR, HAGIQGTSR, and YVRCTRSVSIPAPAYYAHLVAFR. His-808 contacts a divalent metal cation. 4 positions are modified to phosphoserine: Ser-825, Ser-829, Ser-832, and Ser-835.

It belongs to the argonaute family. Ago subfamily. As to quaternary structure, interacts with DICER1 through its Piwi domain and with TARBP2 during assembly of the RNA-induced silencing complex (RISC). Together, DICER1, AGO2 and TARBP2 constitute the trimeric RISC loading complex (RLC), or micro-RNA (miRNA) loading complex (miRLC). Within the RLC/miRLC, DICER1 and TARBP2 are required to process precursor miRNAs (pre-miRNAs) to mature miRNAs and then load them onto AGO2. AGO2 bound to the mature miRNA constitutes the minimal RISC and may subsequently dissociate from DICER1 and TARBP2. Note however that the term RISC has also been used to describe the trimeric RLC/miRLC. The formation of RISC complexes containing siRNAs rather than miRNAs appears to occur independently of DICER1. Interacts with AGO1. Also interacts with DDB1, DDX5, DDX6, DDX20, DHX30, DHX36, DDX47, DHX9, ELAVL, FXR1, GEMIN4, HNRNPF, IGF2BP1, ILF3, IMP8, MATR3, PABPC1, PRMT5, P4HA1, P4HB, RBM4, SART3, TNRC6A, TNRC6B, UPF1 and YBX1. Interacts with the P-body components DCP1A and XRN1. Associates with polysomes and messenger ribonucleoproteins (mNRPs). Interacts with RBM4; the interaction is modulated under stress-induced conditions, occurs under both cell proliferation and differentiation conditions and in an RNA- and phosphorylation-independent manner. Interacts with LIMD1, WTIP and AJUBA. Interacts with TRIM71. Interacts with APOBEC3G in an RNA-dependent manner. Interacts with APOBEC3A, APOBEC3C, APOBEC3F and APOBEC3H. Interacts with DICER1, TARBP2, EIF6, MOV10 and RPL7A (60S ribosome subunit); they form a large RNA-induced silencing complex (RISC). Interacts with FMR1. Interacts with ZFP36. Interacts with RC3H1; the interaction is RNA independent. Interacts with ARB2A. Found in a complex composed of AGO2, CHD7 and ARB2A. Interacts with SND1 and SYT11. Interacts with CLNK. Interacts with GARRE1. Interacts with GRB2; this interaction is important for the formation of a ternary complex containing GRB2, AGO2 and DICER1. Mg(2+) is required as a cofactor. It depends on Mn(2+) as a cofactor. In terms of processing, hydroxylated. 4-hydroxylation appears to enhance protein stability but is not required for miRNA-binding or endonuclease activity. Ubiquitinated on surface-exposed lysines by a SCF-like E3 ubiquitin-protein ligase complex containing ZSWIM8 during target-directed microRNA degradation (TDMD), a process that mediates degradation of microRNAs (miRNAs). Ubiquitination by the SCF-like E3 ubiquitin-protein ligase complex containing ZSWIM8 leads to its subsequent degradation, thereby exposing miRNAs for degradation. ZSWIM8 recognizes and binds AGO2 when it is engaged with a TDMD target. Post-translationally, phosphorylation at Ser-388 by AKT3; leads to up-regulate translational repression of microRNA target and down-regulate endonucleolytic cleavage. In terms of processing, a phosphorylation cycle of C-terminal serine cluster (Ser-825-Ser-835) regulates the release of target mRNAs. Target-binding leads to phosphorylation of these residues by CSNK1A1, which reduces the affinity of AGO2 for mRNA and enables target release. The ANKRD52-PPP6C phosphatase complex dephosphorylates the residues, which primes AGO2 for binding a new target. Ubiquitous expression in 9.5 day embryos with highest levels in forebrain, heart, limb buds, and branchial arches.

It is found in the cytoplasm. The protein resides in the P-body. It localises to the nucleus. It catalyses the reaction Endonucleolytic cleavage to 5'-phosphomonoester.. Required for RNA-mediated gene silencing (RNAi) by the RNA-induced silencing complex (RISC). The 'minimal RISC' appears to include AGO2 bound to a short guide RNA such as a microRNA (miRNA) or short interfering RNA (siRNA). These guide RNAs direct RISC to complementary mRNAs that are targets for RISC-mediated gene silencing. The precise mechanism of gene silencing depends on the degree of complementarity between the miRNA or siRNA and its target. Binding of RISC to a perfectly complementary mRNA generally results in silencing due to endonucleolytic cleavage of the mRNA specifically by AGO2. Binding of RISC to a partially complementary mRNA results in silencing through inhibition of translation, and this is independent of endonuclease activity. May inhibit translation initiation by binding to the 7-methylguanosine cap, thereby preventing the recruitment of the translation initiation factor eIF4-E. May also inhibit translation initiation via interaction with EIF6, which itself binds to the 60S ribosomal subunit and prevents its association with the 40S ribosomal subunit. The inhibition of translational initiation leads to the accumulation of the affected mRNA in cytoplasmic processing bodies (P-bodies), where mRNA degradation may subsequently occur. In some cases RISC-mediated translational repression is also observed for miRNAs that perfectly match the 3' untranslated region (3'-UTR). Can also up-regulate the translation of specific mRNAs under certain growth conditions. Binds to the AU element of the 3'-UTR of the TNF (TNF-alpha) mRNA and up-regulates translation under conditions of serum starvation. Also required for transcriptional gene silencing (TGS), in which short RNAs known as antigene RNAs or agRNAs direct the transcriptional repression of complementary promoter regions. Regulates lymphoid and erythroid development and function, and this is independent of endonuclease activity. The protein is Protein argonaute-2 (Ago2) of Mus musculus (Mouse).